The primary structure comprises 417 residues: NADH-dependent phenylglyoxylate dehydrogenase subunit alpha (417 aa).

In terms of assembly, dimer of heteropentamers composed of an alpha (PadG), a beta (PadI), a gamma (PadE), a delta (PadF) and an epsilon (PadH) subunit.

It catalyses the reaction phenylglyoxylate + NAD(+) + CoA = benzoyl-CoA + CO2 + NADH. Activated by magnesium ions and thiamine diphosphate. Functionally, involved in the anaerobic metabolism of phenylalanine and phenylacetate. Catalyzes the oxidative decarboxylation of phenylglyoxylate to benzoyl-CoA and CO(2). It can also react slowly with 2-oxo-3-methylbutanoate and use different electron acceptors such as benzyl viologen, methyl viologen, FAD or FMN, but NAD seems to be the physiological electron acceptor. Also catalyzes an isotope exchange between CO(2) and the carboxyl group which proves partial or complete reversibility of the oxidative decarboxylation reaction. The sequence is that of NADH-dependent phenylglyoxylate dehydrogenase subunit alpha (padG) from Aromatoleum evansii (Azoarcus evansii).